Here is a 212-residue protein sequence, read N- to C-terminus: UPF0111 protein PH1389 (212 aa).

It belongs to the UPF0111 family.

The protein is UPF0111 protein PH1389 of Pyrococcus horikoshii (strain ATCC 700860 / DSM 12428 / JCM 9974 / NBRC 100139 / OT-3).